We begin with the raw amino-acid sequence, 491 residues long: MTLTSALTRHLKCPELFRNLANEPHPSVAGQRQRFSVFNPSTGELLAEVPDMGAADAHAAIERADAAQEPWSGLTARARSDILWKWHRFILEHSDDLAAILTAEMGKPLGEAKSEVQHAAAYLQWYAEEANRIYGETISAPSTDRRMLVIKQPIGVVGAITPWNFPASMVARKISPALAAGCTVVLKPAEQTPLVAGAMFALAKLAGFPDGVLNLVYASEGDAIGRELCTNPKVRKISFTGSTEVGRLLMRQCSDQIKRISFELGGNAPFIVFDDADIDAAVDGAIQAKFRNAGQTCVSANRIYVQSGVYAEFAEKFTERVRTLKVGDGFDPNVAIGPLINQEALKKIELHISDAVQKGARVRSGGRRTGSSGTFFEPTVVTDVSKTMRLAEEETFGPLAPLLRFDDADHVVREANDTIYGLAAYFYASNLKRVWRVAEALEYGMVGINTGRMSSEAAPFGGVKQSGIGREGSRHGLEDYLDMKYLCVGGL.

NADP(+) is bound by residues tryptophan 163–asparagine 164, lysine 187–glutamate 190, and glycine 241–serine 242. The active-site Proton acceptor is glutamate 263. NADP(+) is bound at residue leucine 264. The active-site Nucleophile is cysteine 297. Glutamate 394 contributes to the NADP(+) binding site.

The protein belongs to the aldehyde dehydrogenase family.

The enzyme catalyses succinate semialdehyde + NADP(+) + H2O = succinate + NADPH + 2 H(+). It participates in amino-acid degradation; 4-aminobutanoate degradation. Functionally, catalyzes the NADP(+) dependent oxidation of succinate semialdehyde to succinate. This chain is Probable succinate-semialdehyde dehydrogenase [NADP(+)] (gabD), found in Sinorhizobium fredii (strain NBRC 101917 / NGR234).